The sequence spans 270 residues: Cyclic AMP-dependent transcription factor ATF-1 (270 aa).

Residues 1–91 (MEDSHKSNTS…DGENPGVSAV (91 aa)) are disordered. Residues 9–21 (TSETAPQSGSTVQ) are compositionally biased toward polar residues. Positions 31–90 (QVSSLSESEESQDSSDSIGSSQKTHGILARRPSYRKILKDLSSEDIRGRKGDGENPGVSA) constitute a KID domain. Ser63 bears the Phosphoserine; by CaMK1, CDK3, RPS6KA4 and RPS6KA5 mark. A compositionally biased stretch (basic and acidic residues) spans 67-83 (ILKDLSSEDIRGRKGDG). Residue Ser197 is modified to Phosphoserine; by HIPK2. Residues Lys207 and Lys214 each participate in a glycyl lysine isopeptide (Lys-Gly) (interchain with G-Cter in SUMO2) cross-link. Residues 212 to 270 (QLKREIRLMKNREAARECRRKKKEYVKCLENRVAVLENQNKTLIEELKTLKDLYSNKSV) form the bZIP domain. The segment at 214-238 (KREIRLMKNREAARECRRKKKEYVK) is basic motif. Positions 240–261 (LENRVAVLENQNKTLIEELKTL) are leucine-zipper.

Belongs to the bZIP family. ATF subfamily. Binds DNA as a dimer. Interacts with HIPK2 and CDK3. Interacts with MOTS-c, a peptide produced by the mitochondrially encoded 12S rRNA MT-RNR1; the interaction occurs in the nucleus following metabolic stress. Phosphorylated at Ser-197 by HIPK2 in response to genotoxic stress. This phosphorylation promotes transcription repression of FTH1 and other antioxidant detoxification genes. The CDK3-mediated phosphorylation at Ser-63 promotes its transactivation and transcriptional activities. Phosphorylated at Ser-63 by RPS6KA4 and RPS6KA5 in response to mitogenic or stress stimuli.

Its subcellular location is the nucleus. This protein binds the cAMP response element (CRE) (consensus: 5'-GTGACGT[AC][AG]-3'), a sequence present in many viral and cellular promoters. Mediates PKA-induced stimulation of CRE-reporter genes. Represses the expression of FTH1 and other antioxidant detoxification genes. Triggers cell proliferation and transformation. This chain is Cyclic AMP-dependent transcription factor ATF-1 (ATF1), found in Bos taurus (Bovine).